The primary structure comprises 103 residues: Large ribosomal subunit protein bL21 (103 aa).

It belongs to the bacterial ribosomal protein bL21 family. As to quaternary structure, part of the 50S ribosomal subunit. Contacts protein L20.

This protein binds to 23S rRNA in the presence of protein L20. This Haemophilus influenzae (strain ATCC 51907 / DSM 11121 / KW20 / Rd) protein is Large ribosomal subunit protein bL21.